We begin with the raw amino-acid sequence, 315 residues long: MDNNEISSHQPVLLREAIQALAIRRDGLYIDGTFGRGGHAQAILAALSSEGRLLGVDKDPAAIAAGHALAQKDGRFTIVQASIGDLARVVSERGWLKRINGVLFDLGVSSPQLESAERGFSFLRDGPLDMRMNPTVGQSAAEWLANAKEKEIAEVLRVYGEERYCRRIARAIIQARELNSLTRTKQLAEVVAKAIPRWERRMHPATRSFQAIRIFINHELEELRAALEQALAALAVKGRLAVISFHSLEDRIVKRFFREKARGEELPPDLPVMQKDFQQASLKVLGKPIWPVPEEIAHNPRARSARLRVAEKQTY.

S-adenosyl-L-methionine-binding positions include Gly37 to His39, Asp57, Asp105, and Gln112.

It belongs to the methyltransferase superfamily. RsmH family.

Its subcellular location is the cytoplasm. It catalyses the reaction cytidine(1402) in 16S rRNA + S-adenosyl-L-methionine = N(4)-methylcytidine(1402) in 16S rRNA + S-adenosyl-L-homocysteine + H(+). In terms of biological role, specifically methylates the N4 position of cytidine in position 1402 (C1402) of 16S rRNA. The protein is Ribosomal RNA small subunit methyltransferase H of Nitrosococcus oceani (strain ATCC 19707 / BCRC 17464 / JCM 30415 / NCIMB 11848 / C-107).